Consider the following 377-residue polypeptide: Peptide chain release factor 2 (377 aa).

An N5-methylglutamine modification is found at Gln257.

Belongs to the prokaryotic/mitochondrial release factor family. Post-translationally, methylated by PrmC. Methylation increases the termination efficiency of RF2.

The protein resides in the cytoplasm. Its function is as follows. Peptide chain release factor 2 directs the termination of translation in response to the peptide chain termination codons UGA and UAA. The sequence is that of Peptide chain release factor 2 from Lactiplantibacillus plantarum (strain ATCC BAA-793 / NCIMB 8826 / WCFS1) (Lactobacillus plantarum).